The primary structure comprises 384 residues: Gastrin-releasing peptide receptor (384 aa).

Residues 1–38 (MALNDCFLLNLEVDHFMHCNISSHSADLPVNDDWSHPG) are Extracellular-facing. Asparagine 20 carries N-linked (GlcNAc...) asparagine glycosylation. Residues 39–62 (ILYVIPAVYGVIILIGLIGNITLI) form a helical membrane-spanning segment. At 63–76 (KIFCTVKSMRNVPN) the chain is on the cytoplasmic side. Residues 77-96 (LFISSLALGDLLLLITCAPV) traverse the membrane as a helical segment. Residues 97–114 (DASRYLADRWLFGRIGCK) are Extracellular-facing. Cysteine 113 and cysteine 196 are oxidised to a cystine. A helical transmembrane segment spans residues 115-136 (LIPFIQLTSVGVSVFTLTALSA). The Cytoplasmic portion of the chain corresponds to 137-152 (DRYKAIVRPMDIQASH). The helical transmembrane segment at 153–174 (ALMKICLKAAFIWIISMLLAIP) threads the bilayer. The Extracellular segment spans residues 175–208 (EAVFSDLHPFHEESTNQTFISCAPYPHSNELHPK). A helical transmembrane segment spans residues 209 to 234 (IHSMASFLVFYVIPLSIISVYYYFIA). Topologically, residues 235–264 (KNLIQSAYNLPVEGNIHVKKQIESRKRLAK) are cytoplasmic. The chain crosses the membrane as a helical span at residues 265 to 285 (TVLVFVGLFAFCWLPNHVIYL). Residues 286–298 (YRSYHYSEVDTSM) lie on the Extracellular side of the membrane. Residues 299–325 (LHFVTSICARLLAFTNSCVNPFALYLL) traverse the membrane as a helical segment. Residues 326–384 (SKSFRKQFNTQLLCCQPGLIIRSHSTGRSTTCMTSLKSTNPSVATFSLINGNICHERYV) lie on the Cytoplasmic side of the membrane. A lipid anchor (S-palmitoyl cysteine) is attached at cysteine 339. Serine 350 carries the phosphoserine modification.

Belongs to the G-protein coupled receptor 1 family. In terms of tissue distribution, highly expressed in pancreas. Also expressed in stomach, adrenal cortex and brain. In brain, expressed in cells throughout the cortex.

The protein resides in the cell membrane. Functionally, receptor for gastrin-releasing peptide (GRP). Signals via association with G proteins that activate a phosphatidylinositol-calcium second messenger system, resulting in Akt phosphorylation. Contributes to the regulation of food intake. Contributes to the perception of prurient stimuli and transmission of itch signals in the spinal cord that promote scratching behavior, but does not play a role in the perception of pain. Contributes primarily to nonhistaminergic itch sensation. In one study, shown to act in the amygdala as part of an inhibitory network which inhibits memory specifically related to learned fear. In another study, shown to contribute to disinhibition of glutamatergic cells in the auditory cortex via signaling on vasoactive intestinal peptide-expressing cells which leads to enhanced auditory fear memories. Contributes to the induction of sighing through signaling in the pre-Botzinger complex, a cluster of several thousand neurons in the ventrolateral medulla responsible for inspiration during respiratory activity. This is Gastrin-releasing peptide receptor (GRPR) from Homo sapiens (Human).